Consider the following 428-residue polypeptide: C4-dicarboxylate transport protein (428 aa).

The next 8 membrane-spanning stretches (helical) occupy residues 8-28 (VLYV…HYYP), 44-64 (LIKM…IAGM), 78-98 (LLYF…ATHI), 148-168 (GEIL…AHLG), 184-204 (VLFG…FGAM), 222-242 (LIGT…GAIA), 307-327 (IYMT…LTWM), and 355-375 (AATL…ILGI).

The protein belongs to the dicarboxylate/amino acid:cation symporter (DAACS) (TC 2.A.23) family.

It localises to the cell inner membrane. Responsible for the transport of dicarboxylates such as succinate, fumarate, and malate from the periplasm across the membrane. The chain is C4-dicarboxylate transport protein from Burkholderia pseudomallei (strain 1106a).